The sequence spans 575 residues: RecBCD enzyme subunit RecD (575 aa).

170–177 contacts ATP; that stretch reads GGPGTGKT.

The protein belongs to the RecD family. As to quaternary structure, heterotrimer of RecB, RecC and RecD. All subunits contribute to DNA-binding.

The catalysed reaction is Couples ATP hydrolysis with the unwinding of duplex DNA at the replication fork by translocating in the 5'-3' direction. This creates two antiparallel DNA single strands (ssDNA). The leading ssDNA polymer is the template for DNA polymerase III holoenzyme which synthesizes a continuous strand.. It carries out the reaction ATP + H2O = ADP + phosphate + H(+). A helicase/nuclease that prepares dsDNA breaks (DSB) for recombinational DNA repair. Binds to DSBs and unwinds DNA via a highly rapid and processive ATP-dependent bidirectional helicase activity. Holoenzyme degrades any linearized DNA that is unable to undergo homologous recombination. In the holoenzyme this subunit has ssDNA-dependent ATPase and 5'-3' helicase activity. When added to pre-assembled RecBC greatly stimulates nuclease activity and augments holoenzyme processivity. Unlike the case in E.coli, suppresses RecA-dependent homologous recombination, is instead required for single-strand annealing pathway repair of DSB. Functionally, a helicase/nuclease that prepares dsDNA breaks (DSB) for recombinational DNA repair. Binds to DSBs and unwinds DNA via a highly rapid and processive ATP-dependent bidirectional helicase activity. Unwinds dsDNA until it encounters a Chi (crossover hotspot instigator) sequence from the 3' direction. Cuts ssDNA a few nucleotides 3' to the Chi site. The properties and activities of the enzyme are changed at Chi. The Chi-altered holoenzyme produces a long 3'-ssDNA overhang and facilitates RecA-binding to the ssDNA for homologous DNA recombination and repair. Holoenzyme degrades any linearized DNA that is unable to undergo homologous recombination. In the holoenzyme this subunit has ssDNA-dependent ATPase and 5'-3' helicase activity. When added to pre-assembled RecBC greatly stimulates nuclease activity and augments holoenzyme processivity. Negatively regulates the RecA-loading ability of RecBCD. The polypeptide is RecBCD enzyme subunit RecD (Mycobacterium tuberculosis (strain CDC 1551 / Oshkosh)).